A 119-amino-acid chain; its full sequence is Large ribosomal subunit protein bL20 (119 aa).

This sequence belongs to the bacterial ribosomal protein bL20 family.

Its function is as follows. Binds directly to 23S ribosomal RNA and is necessary for the in vitro assembly process of the 50S ribosomal subunit. It is not involved in the protein synthesizing functions of that subunit. The chain is Large ribosomal subunit protein bL20 from Anoxybacillus flavithermus (strain DSM 21510 / WK1).